Consider the following 45-residue polypeptide: Photosystem II reaction center protein K (45 aa).

Residues methionine 1–alanine 8 constitute a propeptide that is removed on maturation. Residues leucine 24 to phenylalanine 44 traverse the membrane as a helical segment.

The protein belongs to the PsbK family. PSII is composed of 1 copy each of membrane proteins PsbA, PsbB, PsbC, PsbD, PsbE, PsbF, PsbH, PsbI, PsbJ, PsbK, PsbL, PsbM, PsbT, PsbX, PsbY, PsbZ, Psb30/Ycf12, peripheral proteins PsbO, CyanoQ (PsbQ), PsbU, PsbV and a large number of cofactors. It forms dimeric complexes.

Its subcellular location is the cellular thylakoid membrane. Its function is as follows. One of the components of the core complex of photosystem II (PSII). PSII is a light-driven water:plastoquinone oxidoreductase that uses light energy to abstract electrons from H(2)O, generating O(2) and a proton gradient subsequently used for ATP formation. It consists of a core antenna complex that captures photons, and an electron transfer chain that converts photonic excitation into a charge separation. In Microcystis aeruginosa (strain NIES-843 / IAM M-2473), this protein is Photosystem II reaction center protein K.